Here is a 505-residue protein sequence, read N- to C-terminus: AMP phosphorylase (505 aa).

AMP contacts are provided by residues glycine 170, 196-201, and threonine 205; that span reads SRAITS. The Proton donor role is filled by aspartate 258. AMP is bound by residues serine 266 and lysine 290.

It belongs to the thymidine/pyrimidine-nucleoside phosphorylase family. Type 2 subfamily.

The enzyme catalyses AMP + phosphate = alpha-D-ribose 1,5-bisphosphate + adenine. It catalyses the reaction CMP + phosphate = cytosine + alpha-D-ribose 1,5-bisphosphate. It carries out the reaction UMP + phosphate = alpha-D-ribose 1,5-bisphosphate + uracil. Its function is as follows. Catalyzes the conversion of AMP and phosphate to adenine and ribose 1,5-bisphosphate (R15P). Exhibits phosphorylase activity toward CMP and UMP in addition to AMP. Functions in an archaeal AMP degradation pathway, together with R15P isomerase and RubisCO. The polypeptide is AMP phosphorylase (Methanococcus maripaludis (strain DSM 14266 / JCM 13030 / NBRC 101832 / S2 / LL)).